Consider the following 461-residue polypeptide: Eukaryotic translation initiation factor 3 subunit M (461 aa).

Positions 42–61 are disordered; it reads LLEPLRQQEQSDAEPDRKQR. The 172-residue stretch at 205–376 folds into the PCI domain; the sequence is DQELAQTHVV…SEFLVHRATY (172 aa). The disordered stretch occupies residues 422-461; it reads AAEEAAQGKSGDKKGDRRQRRDQPQQSQPAPEAATAVAAE. A compositionally biased stretch (basic and acidic residues) spans 431 to 444; it reads SGDKKGDRRQRRDQ. A compositionally biased stretch (low complexity) spans 445–461; it reads PQQSQPAPEAATAVAAE.

The protein belongs to the eIF-3 subunit M family. Component of the eukaryotic translation initiation factor 3 (eIF-3) complex.

The protein localises to the cytoplasm. Its function is as follows. Component of the eukaryotic translation initiation factor 3 (eIF-3) complex, which is involved in protein synthesis of a specialized repertoire of mRNAs and, together with other initiation factors, stimulates binding of mRNA and methionyl-tRNAi to the 40S ribosome. The eIF-3 complex specifically targets and initiates translation of a subset of mRNAs involved in cell proliferation. This chain is Eukaryotic translation initiation factor 3 subunit M, found in Aspergillus terreus (strain NIH 2624 / FGSC A1156).